Here is a 150-residue protein sequence, read N- to C-terminus: Heat shock protein beta-3 (150 aa).

Positions 47–150 constitute a sHSP domain; that stretch reads KTRAAQSPPV…VEVKDPVGTK (104 aa).

It belongs to the small heat shock protein (HSP20) family.

The protein localises to the cytoplasm. Its subcellular location is the nucleus. Inhibitor of actin polymerization. This chain is Heat shock protein beta-3 (HSPB3), found in Homo sapiens (Human).